A 126-amino-acid polypeptide reads, in one-letter code: Histone H2B 8 (126 aa).

The span at 1-12 (MPEPAKSAPAPK) shows a compositional bias: low complexity. Residues 1–35 (MPEPAKSAPAPKKGSKKAVTKTQKKGDKKRRKTRK) form a disordered region. Lysine 6 and lysine 13 each carry N6-acetyllysine. Basic residues predominate over residues 13 to 34 (KGSKKAVTKTQKKGDKKRRKTR). Serine 15 bears the Phosphoserine mark. An N6-acetyllysine mark is found at lysine 16 and lysine 21. An O-linked (GlcNAc) serine glycan is attached at serine 113. Residue lysine 121 forms a Glycyl lysine isopeptide (Lys-Gly) (interchain with G-Cter in ubiquitin) linkage.

The protein belongs to the histone H2B family. As to quaternary structure, the nucleosome is a histone octamer containing two molecules each of H2A, H2B, H3 and H4 assembled in one H3-H4 heterotetramer and two H2A-H2B heterodimers. The octamer wraps approximately 147 bp of DNA. In terms of processing, monoubiquitination of Lys-121 by the BRE1 gives a specific tag for epigenetic transcriptional activation and is also prerequisite for histone H3 'Lys-4' and 'Lys-79' methylation. Post-translationally, phosphorylated on Ser-15 during apoptosis; which facilitates apoptotic chromatin condensation. GlcNAcylation at Ser-113 promotes monoubiquitination of Lys-121. It fluctuates in response to extracellular glucose, and associates with transcribed genes.

It is found in the nucleus. The protein localises to the chromosome. Core component of nucleosome. Nucleosomes wrap and compact DNA into chromatin, limiting DNA accessibility to the cellular machineries which require DNA as a template. Histones thereby play a central role in transcription regulation, DNA repair, DNA replication and chromosomal stability. DNA accessibility is regulated via a complex set of post-translational modifications of histones, also called histone code, and nucleosome remodeling. The polypeptide is Histone H2B 8 (H2B-VIII) (Gallus gallus (Chicken)).